Reading from the N-terminus, the 91-residue chain is uncharacterized protein (91 aa).

The chain crosses the membrane as a helical span at residues 50–70 (FGFFGGPFIGGLAGGLIGSAL).

It is found in the cell membrane. This is an uncharacterized protein from Bacillus subtilis (strain 168).